Reading from the N-terminus, the 196-residue chain is Pyridoxal 5'-phosphate synthase subunit PdxT (196 aa).

47–49 (GES) contributes to the L-glutamine binding site. The active-site Nucleophile is the Cys79. Residues Arg106 and 134–135 (IR) contribute to the L-glutamine site. Residues His170 and Glu172 each act as charge relay system in the active site.

It belongs to the glutaminase PdxT/SNO family. In the presence of PdxS, forms a dodecamer of heterodimers. Only shows activity in the heterodimer.

It catalyses the reaction aldehydo-D-ribose 5-phosphate + D-glyceraldehyde 3-phosphate + L-glutamine = pyridoxal 5'-phosphate + L-glutamate + phosphate + 3 H2O + H(+). It carries out the reaction L-glutamine + H2O = L-glutamate + NH4(+). Its pathway is cofactor biosynthesis; pyridoxal 5'-phosphate biosynthesis. Its function is as follows. Catalyzes the hydrolysis of glutamine to glutamate and ammonia as part of the biosynthesis of pyridoxal 5'-phosphate. The resulting ammonia molecule is channeled to the active site of PdxS. This Bacillus subtilis (strain 168) protein is Pyridoxal 5'-phosphate synthase subunit PdxT.